Consider the following 265-residue polypeptide: tRNA pseudouridine synthase A (265 aa).

The active-site Nucleophile is D53. Y111 contacts substrate.

This sequence belongs to the tRNA pseudouridine synthase TruA family. In terms of assembly, homodimer.

The catalysed reaction is uridine(38/39/40) in tRNA = pseudouridine(38/39/40) in tRNA. Functionally, formation of pseudouridine at positions 38, 39 and 40 in the anticodon stem and loop of transfer RNAs. This is tRNA pseudouridine synthase A from Acinetobacter baumannii (strain AB307-0294).